The primary structure comprises 295 residues: Tyrosine recombinase XerC (295 aa).

A Core-binding (CB) domain is found at Met-1 to Val-85. In terms of domain architecture, Tyr recombinase spans His-106–Asp-285. Active-site residues include Arg-145, Lys-169, His-237, Arg-240, and His-263. Tyr-272 functions as the O-(3'-phospho-DNA)-tyrosine intermediate in the catalytic mechanism.

The protein belongs to the 'phage' integrase family. XerC subfamily. As to quaternary structure, forms a cyclic heterotetrameric complex composed of two molecules of XerC and two molecules of XerD.

Its subcellular location is the cytoplasm. Site-specific tyrosine recombinase, which acts by catalyzing the cutting and rejoining of the recombining DNA molecules. The XerC-XerD complex is essential to convert dimers of the bacterial chromosome into monomers to permit their segregation at cell division. It also contributes to the segregational stability of plasmids. The chain is Tyrosine recombinase XerC from Haemophilus influenzae (strain 86-028NP).